Reading from the N-terminus, the 331-residue chain is tRNA N6-adenosine threonylcarbamoyltransferase (331 aa).

Residues H108 and H112 each contribute to the Fe cation site. Residues 129-133 (LVSGG), D161, E178, and S258 each bind substrate. D286 is a Fe cation binding site.

Belongs to the KAE1 / TsaD family. The cofactor is Fe(2+).

Its subcellular location is the cytoplasm. The enzyme catalyses L-threonylcarbamoyladenylate + adenosine(37) in tRNA = N(6)-L-threonylcarbamoyladenosine(37) in tRNA + AMP + H(+). In terms of biological role, required for the formation of a threonylcarbamoyl group on adenosine at position 37 (t(6)A37) in tRNAs that read codons beginning with adenine. Is probably involved in the transfer of the threonylcarbamoyl moiety of threonylcarbamoyl-AMP (TC-AMP) to the N6 group of A37. In Caldivirga maquilingensis (strain ATCC 700844 / DSM 13496 / JCM 10307 / IC-167), this protein is tRNA N6-adenosine threonylcarbamoyltransferase.